The sequence spans 500 residues: Oogenesin-3 (500 aa).

Residues Arg116 to Asp143 form an LRR 1; degenerate repeat. An LRR 2; degenerate repeat occupies His198 to Asn222. One copy of the LRR 3; degenerate repeat lies at Ala223–Gln248. An LRR 4; degenerate repeat occupies Met249–Thr285. LRR repeat units follow at residues Phe286–Leu311, Lys312–Lys343, Cys344–Val367, Arg368–Gln395, and Cys396–His420.

This sequence belongs to the PRAME family. Expressed in ovary, specifically in oocytes. Detected in follicles with two layers of granulosa cells, and are present in early as well as large antral follicles.

The polypeptide is Oogenesin-3 (Mus musculus (Mouse)).